Consider the following 1401-residue polypeptide: Uveal autoantigen with coiled-coil domains and ankyrin repeats protein (1401 aa).

6 ANK repeats span residues 25–53, 54–83, 87–116, 120–149, 153–182, and 186–215; these read LMRA…KLDV, EGRS…DITT, AGRN…PTEH, QGRT…SVNA, DGRT…DINS, and QNRT…DVTL. Ser265 carries the post-translational modification Phosphoserine. Coiled coils occupy residues 273–361, 423–827, and 856–1368; these read TKSN…SRFK, ENEI…EKIY, and ALSS…VIAI. Lys1020 participates in a covalent cross-link: Glycyl lysine isopeptide (Lys-Gly) (interchain with G-Cter in SUMO2).

In terms of assembly, component of the apoptosome complex, composed of APAF1, pro-caspase-9 and UACA. In the complex, it probably interacts directly with APAF1. Interacts with LGALS3. Interacts with ARF6 and ACTB. Interacts with RAB39A. Highly expressed in muscle and heart, moderately in liver, kidney and pancreas, and weakly in placenta and lung.

The protein resides in the nucleus. It localises to the cytoplasm. Its subcellular location is the cytoskeleton. In terms of biological role, regulates APAF1 expression and plays an important role in the regulation of stress-induced apoptosis. Promotes apoptosis by regulating three pathways, apoptosome up-regulation, LGALS3/galectin-3 down-regulation and NF-kappa-B inactivation. Regulates the redistribution of APAF1 into the nucleus after proapoptotic stress. Down-regulates the expression of LGALS3 by inhibiting NFKB1. Its function is as follows. Modulates isoactin dynamics to regulate the morphological alterations required for cell growth and motility. Interaction with ARF6 may modulate cell shape and motility after injury. May be involved in multiple neurite formation. The chain is Uveal autoantigen with coiled-coil domains and ankyrin repeats protein (UACA) from Bos taurus (Bovine).